We begin with the raw amino-acid sequence, 155 residues long: Interleukin-2 (155 aa).

A signal peptide spans 1-20; that stretch reads MYKMQLVACIALSLVLITNS. O-linked (GalNAc...) threonine glycosylation occurs at T23. C77 and C125 are joined by a disulfide.

It belongs to the IL-2 family.

The protein resides in the secreted. Its function is as follows. Cytokine produced by activated CD4-positive helper T-cells and to a lesser extend activated CD8-positive T-cells and natural killer (NK) cells that plays pivotal roles in the immune response and tolerance. Binds to a receptor complex composed of either the high-affinity trimeric IL-2R (IL2RA/CD25, IL2RB/CD122 and IL2RG/CD132) or the low-affinity dimeric IL-2R (IL2RB and IL2RG). Interaction with the receptor leads to oligomerization and conformation changes in the IL-2R subunits resulting in downstream signaling starting with phosphorylation of JAK1 and JAK3. In turn, JAK1 and JAK3 phosphorylate the receptor to form a docking site leading to the phosphorylation of several substrates including STAT5. This process leads to activation of several pathways including STAT, phosphoinositide-3-kinase/PI3K and mitogen-activated protein kinase/MAPK pathways. Functions as a T-cell growth factor and can increase NK-cell cytolytic activity as well. Promotes strong proliferation of activated B-cells and subsequently immunoglobulin production. Plays a pivotal role in regulating the adaptive immune system by controlling the survival and proliferation of regulatory T-cells, which are required for the maintenance of immune tolerance. Moreover, participates in the differentiation and homeostasis of effector T-cell subsets, including Th1, Th2, Th17 as well as memory CD8-positive T-cells. This is Interleukin-2 (IL2) from Dasypus novemcinctus (Nine-banded armadillo).